We begin with the raw amino-acid sequence, 243 residues long: PF03932 family protein CutC (243 aa).

The protein belongs to the CutC family.

The protein localises to the cytoplasm. The sequence is that of PF03932 family protein CutC from Histophilus somni (strain 2336) (Haemophilus somnus).